The primary structure comprises 71 residues: ATP synthase F(0) complex subunit e, mitochondrial (71 aa).

K34 carries the post-translational modification N6-acetyllysine. A Phosphoserine modification is found at S68.

The protein belongs to the ATPase e subunit family. As to quaternary structure, component of the ATP synthase complex composed at least of ATP5F1A/subunit alpha, ATP5F1B/subunit beta, ATP5MC1/subunit c (homooctomer), MT-ATP6/subunit a, MT-ATP8/subunit 8, ATP5ME/subunit e, ATP5MF/subunit f, ATP5MG/subunit g, ATP5MK/subunit k, ATP5MJ/subunit j, ATP5F1C/subunit gamma, ATP5F1D/subunit delta, ATP5F1E/subunit epsilon, ATP5PF/subunit F6, ATP5PB/subunit b, ATP5PD/subunit d, ATP5PO/subunit OSCP. ATP synthase complex consists of a soluble F(1) head domain (subunits alpha(3) and beta(3)) - the catalytic core - and a membrane F(0) domain - the membrane proton channel (subunits c, a, 8, e, f, g, k and j). These two domains are linked by a central stalk (subunits gamma, delta, and epsilon) rotating inside the F1 region and a stationary peripheral stalk (subunits F6, b, d, and OSCP).

Its subcellular location is the mitochondrion. The protein resides in the mitochondrion inner membrane. In terms of biological role, subunit e, of the mitochondrial membrane ATP synthase complex (F(1)F(0) ATP synthase or Complex V) that produces ATP from ADP in the presence of a proton gradient across the membrane which is generated by electron transport complexes of the respiratory chain. ATP synthase complex consist of a soluble F(1) head domain - the catalytic core - and a membrane F(1) domain - the membrane proton channel. These two domains are linked by a central stalk rotating inside the F(1) region and a stationary peripheral stalk. During catalysis, ATP synthesis in the catalytic domain of F(1) is coupled via a rotary mechanism of the central stalk subunits to proton translocation. In vivo, can only synthesize ATP although its ATP hydrolase activity can be activated artificially in vitro. Part of the complex F(0) domain. The chain is ATP synthase F(0) complex subunit e, mitochondrial from Sus scrofa (Pig).